The primary structure comprises 364 residues: Salivary endonuclease (364 aa).

The signal sequence occupies residues 1–24 (MSSFFLSISPLVLALFHVVVQVCS). N-linked (GlcNAc...) asparagine glycosylation is present at asparagine 285.

This sequence belongs to the DNA/RNA non-specific endonuclease family. The cofactor is Mg(2+). In terms of tissue distribution, saliva (at protein level). Female salivary gland.

It localises to the secreted. Hydrolyzes double-stranded DNA with no sequence specificity. Does not cleave ssDNA and RNA. May facilitate blood meal intake by lowering the local viscosity created by the release of host DNA. This chain is Salivary endonuclease, found in Culex quinquefasciatus (Southern house mosquito).